Consider the following 134-residue polypeptide: Holo-[acyl-carrier-protein] synthase (134 aa).

Mg(2+) contacts are provided by Asp8 and Glu59.

The protein belongs to the P-Pant transferase superfamily. AcpS family. The cofactor is Mg(2+).

It is found in the cytoplasm. The catalysed reaction is apo-[ACP] + CoA = holo-[ACP] + adenosine 3',5'-bisphosphate + H(+). Its function is as follows. Transfers the 4'-phosphopantetheine moiety from coenzyme A to a Ser of acyl-carrier-protein. The protein is Holo-[acyl-carrier-protein] synthase of Zymomonas mobilis subsp. mobilis (strain ATCC 31821 / ZM4 / CP4).